The chain runs to 511 residues: ATP synthase subunit alpha (511 aa).

Residue glycine 170–threonine 177 participates in ATP binding.

It belongs to the ATPase alpha/beta chains family. In terms of assembly, F-type ATPases have 2 components, CF(1) - the catalytic core - and CF(0) - the membrane proton channel. CF(1) has five subunits: alpha(3), beta(3), gamma(1), delta(1), epsilon(1). CF(0) has three main subunits: a(1), b(2) and c(9-12). The alpha and beta chains form an alternating ring which encloses part of the gamma chain. CF(1) is attached to CF(0) by a central stalk formed by the gamma and epsilon chains, while a peripheral stalk is formed by the delta and b chains.

It localises to the cell inner membrane. It carries out the reaction ATP + H2O + 4 H(+)(in) = ADP + phosphate + 5 H(+)(out). Its function is as follows. Produces ATP from ADP in the presence of a proton gradient across the membrane. The alpha chain is a regulatory subunit. The polypeptide is ATP synthase subunit alpha (Granulibacter bethesdensis (strain ATCC BAA-1260 / CGDNIH1)).